Reading from the N-terminus, the 447-residue chain is MRYLPHTDTDRKAMLDAIGVASIDDLFTDVPEAARLDGLIDLPTKQTELQVERALAAMSSRNVAASHAPFFVGAGAYKHHVPATVDHLIQRSEFLTAYTPYQPEISQGTLQTLFEFQTQVALLTGMDVANASMYDGSTACAEAVMMAARVTRRTKAVMAGSVHPHYVEASQTLAKYSDVSISVTDAAPADLDAVIAEIDDTTACVVIQTPDIFGRLHDLREVSRIAHEKGALVIAVFTEAVSLGLVEAPGHMGADIAVGEGQSIGVGLNFGGPYVGLFACKDDRRFIRQMPGRLAGETIDADGRRGYVLTLSTREQHIRRDKATSNICTNAGLCSLAWTIHMTLLGEKGLTQLARLNHETACELADALSAVPGVELVNETFFNEFTILLPKNADQVVNDLARFGVLGGVPASRLYPGRFENYLIIAATETNTPEDIAVFAKALAGVL.

This sequence belongs to the GcvP family. N-terminal subunit subfamily. The glycine cleavage system is composed of four proteins: P, T, L and H. In this organism, the P 'protein' is a heterodimer of two subunits.

It carries out the reaction N(6)-[(R)-lipoyl]-L-lysyl-[glycine-cleavage complex H protein] + glycine + H(+) = N(6)-[(R)-S(8)-aminomethyldihydrolipoyl]-L-lysyl-[glycine-cleavage complex H protein] + CO2. The glycine cleavage system catalyzes the degradation of glycine. The P protein binds the alpha-amino group of glycine through its pyridoxal phosphate cofactor; CO(2) is released and the remaining methylamine moiety is then transferred to the lipoamide cofactor of the H protein. This chain is Probable glycine dehydrogenase (decarboxylating) subunit 1, found in Maricaulis maris (strain MCS10) (Caulobacter maris).